Here is a 150-residue protein sequence, read N- to C-terminus: MTDIQIAVQEQPFDQNAVYQWLSEQHSIGATVIFVGKVRDLNLGDEVSSLYLEHYPAMTEKALNEIVAQAKVRWDIQRVSVIHRVGLLQTGDEIVLVGVSSAHRGDAYHANEFIMDFLKSKAPFWKKEQTNQGERWIEARESDKEALEKW.

Residues 37 to 39 (KVR), 103 to 104 (HR), K119, and 126 to 128 (KKE) contribute to the substrate site.

It belongs to the MoaE family. In terms of assembly, heterotetramer of 2 MoaD subunits and 2 MoaE subunits. Also stable as homodimer. The enzyme changes between these two forms during catalysis.

It catalyses the reaction 2 [molybdopterin-synthase sulfur-carrier protein]-C-terminal-Gly-aminoethanethioate + cyclic pyranopterin phosphate + H2O = molybdopterin + 2 [molybdopterin-synthase sulfur-carrier protein]-C-terminal Gly-Gly + 2 H(+). Its pathway is cofactor biosynthesis; molybdopterin biosynthesis. Functionally, converts molybdopterin precursor Z into molybdopterin. This requires the incorporation of two sulfur atoms into precursor Z to generate a dithiolene group. The sulfur is provided by MoaD. In Haemophilus influenzae (strain ATCC 51907 / DSM 11121 / KW20 / Rd), this protein is Molybdopterin synthase catalytic subunit (moaE).